The chain runs to 43 residues: Defensin (43 aa).

3 cysteine pairs are disulfide-bonded: Cys-3–Cys-34, Cys-20–Cys-39, and Cys-24–Cys-41.

The protein resides in the secreted. Functionally, antibacterial peptide. Affects Gram-negative bacteria including methicillin-resistant Staphylococcus aureus. The sequence is that of Defensin from Trypoxylus dichotomus (Japanese rhinoceros beetle).